Consider the following 116-residue polypeptide: Mitochondrial import inner membrane translocase subunit PAM16 like 2 (116 aa).

Residues 1-27 constitute a mitochondrion transit peptide; the sequence is MAGRLLANLIVMGSGIIGRAVFQAYRQ. Residues 57 to 106 form a J-like region; that stretch reads EARQILGVTEKTSWEEILQKYDKLFENNAKAGSFYLQSKVHRAKECLEVV.

Belongs to the TIM16/PAM16 family. As to expression, expressed constitutively and ubiquitously, except in root tips, at low levels.

The protein localises to the mitochondrion inner membrane. The protein resides in the cytoplasm. Its function is as follows. Regulates ATP-dependent protein translocation into the mitochondrial matrix. Involved in the uptake of thaxtomin, a phytotoxin produced by Streptomyces bacteria, that causes dramatic cell swelling, reduced seedling growth, and inhibition of cellulose synthesis. Modulates polar auxin transport. Involved in importing a negative regulator of plant immunity into mitochondria, thus protecting plants from over-accumulation of reactive oxygen species (ROS) and preventing autoimmunity. Confers sensitivity to virulent pathogens such as the oomycete H.arabidopsidis Noco2 and the bacteria P.syringae pv. maculicola ES4326. In Arabidopsis thaliana (Mouse-ear cress), this protein is Mitochondrial import inner membrane translocase subunit PAM16 like 2.